We begin with the raw amino-acid sequence, 651 residues long: tRNA uridine 5-carboxymethylaminomethyl modification enzyme MnmG (651 aa).

11–16 (GAGHAG) serves as a coordination point for FAD. Residue 296–310 (GPRYCPSIEDKIVRF) participates in NAD(+) binding.

This sequence belongs to the MnmG family. As to quaternary structure, homodimer. Heterotetramer of two MnmE and two MnmG subunits. It depends on FAD as a cofactor.

Its subcellular location is the cytoplasm. NAD-binding protein involved in the addition of a carboxymethylaminomethyl (cmnm) group at the wobble position (U34) of certain tRNAs, forming tRNA-cmnm(5)s(2)U34. This Chloroflexus aurantiacus (strain ATCC 29366 / DSM 635 / J-10-fl) protein is tRNA uridine 5-carboxymethylaminomethyl modification enzyme MnmG.